We begin with the raw amino-acid sequence, 248 residues long: Ureidoacrylate amidohydrolase RutB (248 aa).

Aspartate 41 acts as the Proton acceptor in catalysis. Lysine 150 is an active-site residue. The active-site Nucleophile is cysteine 183.

The protein belongs to the isochorismatase family. RutB subfamily.

It catalyses the reaction (Z)-3-ureidoacrylate + H2O + H(+) = (Z)-3-aminoacrylate + NH4(+) + CO2. The enzyme catalyses (Z)-3-ureidoacrylate + H2O = (Z)-3-aminoacrylate + carbamate + H(+). It carries out the reaction (Z)-2-methylureidoacrylate + H2O + H(+) = (Z)-2-methylaminoacrylate + NH4(+) + CO2. Functionally, hydrolyzes ureidoacrylate to form aminoacrylate and carbamate. The carbamate hydrolyzes spontaneously, thereby releasing one of the nitrogen atoms of the pyrimidine ring as ammonia and one of its carbon atoms as CO2. The polypeptide is Ureidoacrylate amidohydrolase RutB (Methylorubrum extorquens (strain ATCC 14718 / DSM 1338 / JCM 2805 / NCIMB 9133 / AM1) (Methylobacterium extorquens)).